Here is a 331-residue protein sequence, read N- to C-terminus: Protein RecA (331 aa).

Residue glycine 67–threonine 74 participates in ATP binding.

The protein belongs to the RecA family.

The protein localises to the cytoplasm. Can catalyze the hydrolysis of ATP in the presence of single-stranded DNA, the ATP-dependent uptake of single-stranded DNA by duplex DNA, and the ATP-dependent hybridization of homologous single-stranded DNAs. It interacts with LexA causing its activation and leading to its autocatalytic cleavage. This Wigglesworthia glossinidia brevipalpis protein is Protein RecA.